A 211-amino-acid chain; its full sequence is Large ribosomal subunit protein uL4 (211 aa).

Residues 63–94 form a disordered region; sequence RFGRQKGGGTARHGARSAPQFVGGGKAHGPRV.

Belongs to the universal ribosomal protein uL4 family. In terms of assembly, part of the 50S ribosomal subunit.

Its function is as follows. One of the primary rRNA binding proteins, this protein initially binds near the 5'-end of the 23S rRNA. It is important during the early stages of 50S assembly. It makes multiple contacts with different domains of the 23S rRNA in the assembled 50S subunit and ribosome. In terms of biological role, forms part of the polypeptide exit tunnel. The polypeptide is Large ribosomal subunit protein uL4 (Maricaulis maris (strain MCS10) (Caulobacter maris)).